The sequence spans 395 residues: Flap endonuclease 1 (395 aa).

An N-domain region spans residues 1–104 (MGIKHLYQII…GELAKRFMRK (104 aa)). Mg(2+) is bound at residue D34. DNA-binding residues include R47 and R70. Mg(2+) is bound by residues D86, E158, E160, D179, and D181. Positions 122-253 (EVEKFSRRTV…NTALKLIRDH (132 aa)) are I-domain. Residue E158 coordinates DNA. DNA contacts are provided by G231 and D233. A Mg(2+)-binding site is contributed by D233. The tract at residues 341–349 (QQSRLEGFF) is interaction with PCNA. Over residues 360-389 (AVLKRKHEEKLELQKKKKKEDAKAKKEAKS) the composition is skewed to basic and acidic residues. The tract at residues 360–395 (AVLKRKHEEKLELQKKKKKEDAKAKKEAKSKPRGTT) is disordered.

It belongs to the XPG/RAD2 endonuclease family. FEN1 subfamily. In terms of assembly, interacts with PCNA. Three molecules of FEN1 bind to one PCNA trimer with each molecule binding to one PCNA monomer. PCNA stimulates the nuclease activity without altering cleavage specificity. It depends on Mg(2+) as a cofactor. Phosphorylated. Phosphorylation upon DNA damage induces relocalization to the nuclear plasma.

It localises to the nucleus. Its subcellular location is the nucleolus. The protein localises to the nucleoplasm. The protein resides in the mitochondrion. In terms of biological role, structure-specific nuclease with 5'-flap endonuclease and 5'-3' exonuclease activities involved in DNA replication and repair. During DNA replication, cleaves the 5'-overhanging flap structure that is generated by displacement synthesis when DNA polymerase encounters the 5'-end of a downstream Okazaki fragment. It enters the flap from the 5'-end and then tracks to cleave the flap base, leaving a nick for ligation. Also involved in the long patch base excision repair (LP-BER) pathway, by cleaving within the apurinic/apyrimidinic (AP) site-terminated flap. Acts as a genome stabilization factor that prevents flaps from equilibrating into structures that lead to duplications and deletions. Also possesses 5'-3' exonuclease activity on nicked or gapped double-stranded DNA, and exhibits RNase H activity. Also involved in replication and repair of rDNA and in repairing mitochondrial DNA. This chain is Flap endonuclease 1, found in Ajellomyces capsulatus (strain NAm1 / WU24) (Darling's disease fungus).